The sequence spans 438 residues: MPKIVVVGAVAGGATCASQIRRLDKESDIIIFEKDRDMSFANCALPYVIGEVVEDRRYALAYTPEKFYDRKQITVKTYHEVIAINDERQTVSVLNRKTNEQFEESYDKLILSPGASANSLGFESDITFTLRNLEDTDAIDQFIKANQVDKVLVVGAGYVSLEVLENLNERGLHPTLIHRSDKINKLMDADMNQPILDELDKREIPYRLNEEINAINGNEITFKSGKVEHYDMIIEGVGTHPNSKFIESSNIKLDRKGFIPVNDKFETNVPNIYAIGDIATSHYRHVDLPASVPLAWGAHRAASIVAEQIAGNDTIEFKGFLGNNIVKFFDYTFASVGVKPNELKQFDYKMVEVTQGAHANYYPGNSPLHLRVYYDTSNRQILRAAAVGKEGADKRIDVLSMAMMNQLTVDELTEFEVAYAPPYSHPKDLINMIGYKAK.

8-33 lines the FAD pocket; that stretch reads GAVAGGATCASQIRRLDKESDIIIFE. Substrate-binding residues include threonine 15, glutamine 19, arginine 22, serine 39, and asparagine 42. Cysteine 43 serves as the catalytic Nucleophile. Catalysis depends on cysteine 43, which acts as the Redox-active. A substrate-binding site is contributed by lysine 71. 151 to 166 is an NADP(+) binding site; it reads VLVVGAGYVSLEVLEN. FAD is bound at residue 267 to 277; that stretch reads TNVPNIYAIGD. Residue histidine 299 participates in substrate binding. Tyrosine 419 is an FAD binding site. Lysine 427 lines the substrate pocket.

Belongs to the class-III pyridine nucleotide-disulfide oxidoreductase family. In terms of assembly, homodimer. FAD serves as cofactor.

It carries out the reaction NADP(+) + 2 CoA = CoA-disulfide + NADPH + H(+). In terms of biological role, catalyzes specifically the NADPH-dependent reduction of coenzyme A disulfide. Is also active with other disulfide substrates containing at least one 4'-phosphopantethienyl moiety such as 4,4'-diphosphopantethine, but is not able to reduce oxidized glutathione, cystine, pantethine, or H(2)O(2). The chain is Coenzyme A disulfide reductase (cdr) from Staphylococcus aureus (strain NCTC 8325 / PS 47).